The primary structure comprises 321 residues: GTP 3',8-cyclase (321 aa).

Residues 5-233 (SFNRVIDYIR…QGSSKIYTLE (229 aa)) form the Radical SAM core domain. Arginine 14 is a GTP binding site. [4Fe-4S] cluster-binding residues include cysteine 21 and cysteine 25. Tyrosine 27 contributes to the S-adenosyl-L-methionine binding site. Residue cysteine 28 coordinates [4Fe-4S] cluster. Residue arginine 64 coordinates GTP. Glycine 68 provides a ligand contact to S-adenosyl-L-methionine. GTP is bound at residue serine 95. An S-adenosyl-L-methionine-binding site is contributed by serine 119. Lysine 155 serves as a coordination point for GTP. Methionine 189 contacts S-adenosyl-L-methionine. [4Fe-4S] cluster is bound by residues cysteine 249 and cysteine 252. 254 to 256 (RIR) contributes to the GTP binding site. Cysteine 266 contributes to the [4Fe-4S] cluster binding site.

It belongs to the radical SAM superfamily. MoaA family. Monomer and homodimer. Requires [4Fe-4S] cluster as cofactor.

It catalyses the reaction GTP + AH2 + S-adenosyl-L-methionine = (8S)-3',8-cyclo-7,8-dihydroguanosine 5'-triphosphate + 5'-deoxyadenosine + L-methionine + A + H(+). It participates in cofactor biosynthesis; molybdopterin biosynthesis. In terms of biological role, catalyzes the cyclization of GTP to (8S)-3',8-cyclo-7,8-dihydroguanosine 5'-triphosphate. This is GTP 3',8-cyclase from Helicobacter pylori (strain HPAG1).